A 289-amino-acid chain; its full sequence is ATP synthase gamma chain (289 aa).

It belongs to the ATPase gamma chain family. F-type ATPases have 2 components, CF(1) - the catalytic core - and CF(0) - the membrane proton channel. CF(1) has five subunits: alpha(3), beta(3), gamma(1), delta(1), epsilon(1). CF(0) has three main subunits: a, b and c.

The protein resides in the cell membrane. Its function is as follows. Produces ATP from ADP in the presence of a proton gradient across the membrane. The gamma chain is believed to be important in regulating ATPase activity and the flow of protons through the CF(0) complex. The protein is ATP synthase gamma chain of Buchnera aphidicola subsp. Melaphis rhois.